A 206-amino-acid polypeptide reads, in one-letter code: 2,3-bisphosphoglycerate-dependent phosphoglycerate mutase (206 aa).

Substrate-binding positions include R9 to N16, T22 to G23, R61, E88 to Y91, K99, R115 to R116, and G159 to N160. H10 functions as the Tele-phosphohistidine intermediate in the catalytic mechanism. The active-site Proton donor/acceptor is the E88.

Belongs to the phosphoglycerate mutase family. BPG-dependent PGAM subfamily. As to quaternary structure, homodimer.

The enzyme catalyses (2R)-2-phosphoglycerate = (2R)-3-phosphoglycerate. The protein operates within carbohydrate degradation; glycolysis; pyruvate from D-glyceraldehyde 3-phosphate: step 3/5. Its function is as follows. Catalyzes the interconversion of 2-phosphoglycerate and 3-phosphoglycerate. The chain is 2,3-bisphosphoglycerate-dependent phosphoglycerate mutase from Brucella abortus (strain S19).